Consider the following 87-residue polypeptide: U15-lycotoxin-Ls1h (87 aa).

A signal peptide spans 1 to 20; sequence MNSKIFAVLLLLGLLSCVLS. Positions 21 to 66 constitute a WAP domain; that stretch reads DQYCPKSSITACKKMNTRNDCCKDDDCTGGSWCCATPCGNFCKYPT. 5 disulfide bridges follow: Cys24-Cys54, Cys32-Cys58, Cys41-Cys53, Cys42-Cys80, and Cys47-Cys62.

It belongs to the venom protein 11 family. 01 (wap-1) subfamily. Post-translationally, contains 5 disulfide bonds. Expressed by the venom gland.

It localises to the secreted. Its function is as follows. Has antibacterial activity. The sequence is that of U15-lycotoxin-Ls1h from Lycosa singoriensis (Wolf spider).